A 449-amino-acid chain; its full sequence is Probable glycosyltransferase 5 (449 aa).

Basic and acidic residues predominate over residues Met-1 to Arg-14. Positions Met-1 to Cys-24 are disordered. Residues Met-1–Asp-28 are Cytoplasmic-facing. The chain crosses the membrane as a helical; Signal-anchor for type II membrane protein span at residues Ala-29–Pro-49. Over Thr-50–Thr-449 the chain is Lumenal. A disordered region spans residues Ala-74–Tyr-109. N-linked (GlcNAc...) asparagine glycans are attached at residues Asn-89, Asn-413, and Asn-422.

The protein belongs to the glycosyltransferase 34 family.

The protein localises to the golgi apparatus membrane. Functionally, probable glycosyltransferase that may be involved in the biosynthesis of xyloglucan. In Oryza sativa subsp. japonica (Rice), this protein is Probable glycosyltransferase 5.